The chain runs to 407 residues: DNA primase DnaG (407 aa).

In terms of domain architecture, Toprim spans 172 to 248 (DWIIVVEGRA…HIDYVARAPP (77 aa)). Mg(2+) is bound by residues Glu-178, Asp-222, and Asp-224. Positions 279-304 (AGAEKTEAAAPPPQQPTAPPAAPSQQ) are disordered. Pro residues predominate over residues 288–300 (APPPQQPTAPPAA).

Belongs to the archaeal DnaG primase family. As to quaternary structure, forms a ternary complex with MCM helicase and DNA. Component of the archaeal exosome complex. Mg(2+) is required as a cofactor.

It catalyses the reaction ssDNA + n NTP = ssDNA/pppN(pN)n-1 hybrid + (n-1) diphosphate.. In terms of biological role, RNA polymerase that catalyzes the synthesis of short RNA molecules used as primers for DNA polymerase during DNA replication. Also part of the exosome, which is a complex involved in RNA degradation. Acts as a poly(A)-binding protein that enhances the interaction between heteromeric, adenine-rich transcripts and the exosome. The sequence is that of DNA primase DnaG from Pyrobaculum calidifontis (strain DSM 21063 / JCM 11548 / VA1).